The following is a 367-amino-acid chain: Chorismate synthase (367 aa).

An NADP(+)-binding site is contributed by R48. FMN contacts are provided by residues 125–127, 243–244, G283, 298–302, and R324; these read RSS, NA, and KPTSS.

Belongs to the chorismate synthase family. Homotetramer. It depends on FMNH2 as a cofactor.

It carries out the reaction 5-O-(1-carboxyvinyl)-3-phosphoshikimate = chorismate + phosphate. It participates in metabolic intermediate biosynthesis; chorismate biosynthesis; chorismate from D-erythrose 4-phosphate and phosphoenolpyruvate: step 7/7. Functionally, catalyzes the anti-1,4-elimination of the C-3 phosphate and the C-6 proR hydrogen from 5-enolpyruvylshikimate-3-phosphate (EPSP) to yield chorismate, which is the branch point compound that serves as the starting substrate for the three terminal pathways of aromatic amino acid biosynthesis. This reaction introduces a second double bond into the aromatic ring system. The protein is Chorismate synthase of Psychrobacter arcticus (strain DSM 17307 / VKM B-2377 / 273-4).